The primary structure comprises 112 residues: Transmembrane protein 14 homolog (112 aa).

4 helical membrane passes run 9 to 26, 36 to 53, 60 to 77, and 87 to 109; these read FKLN…GVIG, LIAG…AYYL, VGLG…GVMG, and IPII…LYNI.

This sequence belongs to the TMEM14 family.

It localises to the membrane. The protein is Transmembrane protein 14 homolog of Dictyostelium discoideum (Social amoeba).